Here is a 354-residue protein sequence, read N- to C-terminus: MAYQYHNDLLAPYLALSQGDKVQAEYVWIDGDGGLRSKTMTMTKKTTDIGQLRIWDFDGSSTNQAPGGDSDVYLRPAAIFKDPFRGGDNILVLAETFNNDGTPNRTNHRHHTKKVMDLAKDSVPWFGLEQEYTLFDADGTPFGWPKGGFPGPQGPYYCGAGTGKVFARDLIEAHYRACLYAGVNISGINAEVMPSQWEFQVGPCEGISMGDHLWMARYLLVRIAEQWGIKVSFHPKPLAGDWNGAGCHTNYSTKVMREPGGMKYIDEAIEKLSKRHAEHIAVYGEDNDLRLTGRHETGHIGDFSSGVANRGASIRVPRHVAAQGYGYLEDRRPASNIDPYRVTGIIVETTVLDK.

The region spanning 22–101 is the GS beta-grasp domain; it reads VQAEYVWIDG…VLAETFNNDG (80 aa). The GS catalytic domain maps to 108–354; it reads HRHHTKKVMD…IIVETTVLDK (247 aa).

The protein belongs to the glutamine synthetase family. In terms of assembly, homooctamer.

The protein localises to the cytoplasm. It carries out the reaction L-glutamate + NH4(+) + ATP = L-glutamine + ADP + phosphate + H(+). This is Glutamine synthetase (GLNA) from Suillus bovinus (Jersey cow bolete).